A 314-amino-acid chain; its full sequence is 4-hydroxy-3-methylbut-2-enyl diphosphate reductase (314 aa).

[4Fe-4S] cluster is bound at residue Cys-12. Positions 43 and 81 each coordinate (2E)-4-hydroxy-3-methylbut-2-enyl diphosphate. Residues His-43 and His-81 each coordinate dimethylallyl diphosphate. The isopentenyl diphosphate site is built by His-43 and His-81. Cys-103 serves as a coordination point for [4Fe-4S] cluster. Residue His-131 participates in (2E)-4-hydroxy-3-methylbut-2-enyl diphosphate binding. His-131 lines the dimethylallyl diphosphate pocket. Isopentenyl diphosphate is bound at residue His-131. Catalysis depends on Glu-133, which acts as the Proton donor. (2E)-4-hydroxy-3-methylbut-2-enyl diphosphate is bound at residue Thr-170. Cys-198 provides a ligand contact to [4Fe-4S] cluster. (2E)-4-hydroxy-3-methylbut-2-enyl diphosphate-binding residues include Ser-226, Asn-228, and Ser-271. Residues Ser-226, Asn-228, and Ser-271 each contribute to the dimethylallyl diphosphate site. Positions 226, 228, and 271 each coordinate isopentenyl diphosphate.

The protein belongs to the IspH family. It depends on [4Fe-4S] cluster as a cofactor.

The catalysed reaction is isopentenyl diphosphate + 2 oxidized [2Fe-2S]-[ferredoxin] + H2O = (2E)-4-hydroxy-3-methylbut-2-enyl diphosphate + 2 reduced [2Fe-2S]-[ferredoxin] + 2 H(+). It catalyses the reaction dimethylallyl diphosphate + 2 oxidized [2Fe-2S]-[ferredoxin] + H2O = (2E)-4-hydroxy-3-methylbut-2-enyl diphosphate + 2 reduced [2Fe-2S]-[ferredoxin] + 2 H(+). It participates in isoprenoid biosynthesis; dimethylallyl diphosphate biosynthesis; dimethylallyl diphosphate from (2E)-4-hydroxy-3-methylbutenyl diphosphate: step 1/1. Its pathway is isoprenoid biosynthesis; isopentenyl diphosphate biosynthesis via DXP pathway; isopentenyl diphosphate from 1-deoxy-D-xylulose 5-phosphate: step 6/6. Its function is as follows. Catalyzes the conversion of 1-hydroxy-2-methyl-2-(E)-butenyl 4-diphosphate (HMBPP) into a mixture of isopentenyl diphosphate (IPP) and dimethylallyl diphosphate (DMAPP). Acts in the terminal step of the DOXP/MEP pathway for isoprenoid precursor biosynthesis. The polypeptide is 4-hydroxy-3-methylbut-2-enyl diphosphate reductase (Bacillus velezensis (strain DSM 23117 / BGSC 10A6 / LMG 26770 / FZB42) (Bacillus amyloliquefaciens subsp. plantarum)).